We begin with the raw amino-acid sequence, 481 residues long: MKIIKGKKCDWEMIIGLEVHAQVISNSKLFSGASAKTYDSLPNTQVSLFDVAMPGMLPLLNQYCISQAVKTGLALSCKINNYSAFDRKNYFYPDLPSGYQITQFYYPIATDGKVVLEESNDKEVRITRIHLEQDAGKSIHEYGKTYVDFNRAGVALMEIVSEPDLRSTDEVAEYLKKLRMILRFIGTCDGDMEKGSFRCDANVSVRPLGSDKLGIRSEIKNLNSIRYVVQAIEYEANKQVMALENGEELIQNTLLFDVILGETRVIRNKEDAHDYRYFPDPDLFSLEIDDQYISEVKLSLPELPMQKRDRYIRDFKLNKYDADILVADRDVAAYFEEVVQKHDAKLAASWIVCDLFARLNKLGISINESAVKAGDMIQLLDLIVDKTISGKIAKQVFAIMFESGKSPISIVNEYGLKQLDDSDSVSMIVENVLENNKDKVLQYKQGKEKLFGYFVGQVMKETQGKANPELVNSIIKEKLQE.

This sequence belongs to the GatB/GatE family. GatB subfamily. In terms of assembly, heterotrimer of A, B and C subunits.

The catalysed reaction is L-glutamyl-tRNA(Gln) + L-glutamine + ATP + H2O = L-glutaminyl-tRNA(Gln) + L-glutamate + ADP + phosphate + H(+). The enzyme catalyses L-aspartyl-tRNA(Asn) + L-glutamine + ATP + H2O = L-asparaginyl-tRNA(Asn) + L-glutamate + ADP + phosphate + 2 H(+). Allows the formation of correctly charged Asn-tRNA(Asn) or Gln-tRNA(Gln) through the transamidation of misacylated Asp-tRNA(Asn) or Glu-tRNA(Gln) in organisms which lack either or both of asparaginyl-tRNA or glutaminyl-tRNA synthetases. The reaction takes place in the presence of glutamine and ATP through an activated phospho-Asp-tRNA(Asn) or phospho-Glu-tRNA(Gln). This is Aspartyl/glutamyl-tRNA(Asn/Gln) amidotransferase subunit B from Ehrlichia ruminantium (strain Gardel).